The chain runs to 351 residues: Synaptonemal complex central element protein 1 (351 aa).

Positions Met-1–Ala-10 are enriched in polar residues. Disordered regions lie at residues Met-1–Gln-31 and Lys-267–Phe-351. Residues Arg-52–Pro-290 are a coiled coil.

It belongs to the SYCE family. As to quaternary structure, homodimer. Found in a complex with SYCP1 and SYCE2. Interacts with SYCP1, SYCE2 and SYCE3. Interacts with SIX6OS1.

The protein resides in the nucleus. Its subcellular location is the chromosome. Its function is as follows. Major component of the transverse central element of synaptonemal complexes (SCS), formed between homologous chromosomes during meiotic prophase. Requires SYCP1 in order to be incorporated into the central element. May have a role in the synaptonemal complex assembly, stabilization and recombination. The polypeptide is Synaptonemal complex central element protein 1 (SYCE1) (Homo sapiens (Human)).